A 217-amino-acid polypeptide reads, in one-letter code: DNA repair protein homolog YobH (217 aa).

The 68-residue stretch at 1-68 (MAKAIQSSMW…RPLSKMWGIG (68 aa)) folds into the UmuC domain.

The protein belongs to the DNA polymerase type-Y family.

The polypeptide is DNA repair protein homolog YobH (yobH) (Bacillus subtilis (strain 168)).